Reading from the N-terminus, the 407-residue chain is D-inositol 3-phosphate glycosyltransferase (407 aa).

H2 contributes to the 1D-myo-inositol 3-phosphate binding site. UDP-N-acetyl-alpha-D-glucosamine-binding positions include 8 to 9 and G16; that span reads QP. Residues 13-18, R71, Y104, T128, and R148 each bind 1D-myo-inositol 3-phosphate; that span reads DAGGLN. Residues R222 and K227 each contribute to the UDP-N-acetyl-alpha-D-glucosamine site. Mg(2+) contacts are provided by Y297, R298, and A300. UDP-N-acetyl-alpha-D-glucosamine-binding residues include E310 and E318. Position 324 (T324) interacts with Mg(2+).

The protein belongs to the glycosyltransferase group 1 family. MshA subfamily. In terms of assembly, homodimer.

It catalyses the reaction 1D-myo-inositol 3-phosphate + UDP-N-acetyl-alpha-D-glucosamine = 1D-myo-inositol 2-acetamido-2-deoxy-alpha-D-glucopyranoside 3-phosphate + UDP + H(+). Functionally, catalyzes the transfer of a N-acetyl-glucosamine moiety to 1D-myo-inositol 3-phosphate to produce 1D-myo-inositol 2-acetamido-2-deoxy-glucopyranoside 3-phosphate in the mycothiol biosynthesis pathway. The chain is D-inositol 3-phosphate glycosyltransferase from Frankia alni (strain DSM 45986 / CECT 9034 / ACN14a).